The sequence spans 1564 residues: NACHT domain- and WD repeat-containing protein 1 (1564 aa).

The region spanning 335–661 is the NACHT domain; sequence TPLVLFGPPG…LLAIAHRQLV (327 aa). ATP is bound at residue 341–348; it reads GPPGIGKT. WD repeat units lie at residues 866 to 905, 908 to 947, 956 to 994, 998 to 1037, 1044 to 1082, 1083 to 1121, 1126 to 1165, 1167 to 1207, 1212 to 1251, 1253 to 1290, 1291 to 1327, 1338 to 1376, 1380 to 1418, and 1425 to 1462; these read GCHKGITAMAWGVEEKLLVIGTQDGIMAVWDMEEQHVIHM, GHTGEVRCVKIFAKGTLANSASKDYTLHLWNLLSGQEKFT, PAEPQIWNLHVDEAHKVVYSASGSKINAWNLETAEPVFH, DASDPWMCMAVLASQATLLTVSRDGVVSLWSSATGKLQGK, KEETPTCAVSVQKQGKLVTGFSNGSISLVSSKGDRLLEK, LPDAVRFLVVSEDESLLAAGFGRSVRIFLADSRGFRRFM, EHEDMVETAVFGTENNLIITGSLDALIQVWSLSEQGTLLD, LEGV…RSRV, LDRTGLTAVSHNGSYVYFPKIGDKNKVTIWDLAEGEEQDS, DTSSEIRCLEVAEQRKLLFTGLVSGVVLVFPLNSRQDV, ICIPPPEARKAINCMSLSKCEDRLAIAYDNIVLVLDI, GPRYTFYTQLPETLSSVAILTDYRVVYSMTNGDLFLYEC, KAFPLETHRSRVACVEVSHKEQLVVSGSEDALLCLWDLQ, and EMSYTSSYCRGVQCACFSKDDKYVYVGLKDRSILVWSV.

In terms of assembly, may interact with HSP90AA1, HSP90AB1 and BAG2. As to expression, expressed at highest levels in prostate, followed by testis, retina, trachea and optic nerve. Also detected in brain, epididymis, lung, vagina and pituitary. In the prostate, tends to be up-regulated during malignant progression compared to normal epithelium (at protein level).

The protein resides in the cytoplasm. The protein localises to the cytosol. Its function is as follows. May play a role in the control of androgen receptor (AR) protein steady-state levels. The chain is NACHT domain- and WD repeat-containing protein 1 (NWD1) from Homo sapiens (Human).